The primary structure comprises 440 residues: NADH-quinone oxidoreductase subunit D (440 aa).

Belongs to the complex I 49 kDa subunit family. In terms of assembly, NDH-1 is composed of 14 different subunits. Subunits NuoB, C, D, E, F, and G constitute the peripheral sector of the complex.

It localises to the cell membrane. The catalysed reaction is a quinone + NADH + 5 H(+)(in) = a quinol + NAD(+) + 4 H(+)(out). NDH-1 shuttles electrons from NADH, via FMN and iron-sulfur (Fe-S) centers, to quinones in the respiratory chain. The immediate electron acceptor for the enzyme in this species is believed to be a menaquinone. Couples the redox reaction to proton translocation (for every two electrons transferred, four hydrogen ions are translocated across the cytoplasmic membrane), and thus conserves the redox energy in a proton gradient. This is NADH-quinone oxidoreductase subunit D from Acidothermus cellulolyticus (strain ATCC 43068 / DSM 8971 / 11B).